The primary structure comprises 708 residues: Prolyl 3-hydroxylase 2 (708 aa).

The N-terminal stretch at 1–24 (MRERIWAPPLLLLLPLLLPPPLWG) is a signal peptide. TPR repeat units follow at residues 44-77 (FDLL…HRRL), 148-181 (RVPY…NPEH), 210-243 (HMES…YFVE), and 306-339 (PLHY…HPDD). N-linked (GlcNAc...) asparagine glycans are attached at residues Asn-449 and Asn-549. One can recognise a Fe2OG dioxygenase domain in the interval 557–671 (THMVCRTALS…RCAVALWFTL (115 aa)). Residues His-580, Asp-582, and His-652 each coordinate Fe cation. Arg-662 is a catalytic residue. A Prevents secretion from ER motif is present at residues 705 to 708 (KDEL).

Belongs to the leprecan family. Fe cation is required as a cofactor. It depends on L-ascorbate as a cofactor. In terms of tissue distribution, expression localized to the epithelia of bile ducts and to the sacroplasm of heart muscle and skeletal muscle. In the pancreas, localized to a subpopulation of Langerhans islet cells and in the salivary gland, expressed in acinar cells (at protein level). Expressed in adult heart, placenta, lung, liver, skeletal muscle and kidney. Detected in fetal heart, spleen, lung, liver skeletal muscle and kidney.

The protein resides in the endoplasmic reticulum. The protein localises to the sarcoplasmic reticulum. Its subcellular location is the golgi apparatus. It carries out the reaction L-prolyl-[collagen] + 2-oxoglutarate + O2 = trans-3-hydroxy-L-prolyl-[collagen] + succinate + CO2. Inhibited by pyridine 2,4-dicarboxylate, an analog of 2-oxoglutarate. In terms of biological role, prolyl 3-hydroxylase that catalyzes the post-translational formation of 3-hydroxyproline on collagens. Contributes to proline 3-hydroxylation of collagen COL4A1 and COL1A1 in tendons, the eye sclera and in the eye lens capsule. Has high activity with the type IV collagen COL4A1, and lower activity with COL1A1. Catalyzes hydroxylation of the first Pro in Gly-Pro-Hyp sequences where Hyp is 4-hydroxyproline. Has no activity on substrates that lack 4-hydroxyproline in the third position. This Homo sapiens (Human) protein is Prolyl 3-hydroxylase 2.